Reading from the N-terminus, the 895-residue chain is Glutamate receptor 2.3 (895 aa).

The first 23 residues, 1-23, serve as a signal peptide directing secretion; sequence MRTEKLFFCILLVFFFCLEFNRG. The Extracellular segment spans residues 24 to 582; it reads QNNGKTLVDV…ILFMKPLSWK (559 aa). Residues asparagine 52, asparagine 203, asparagine 266, asparagine 330, asparagine 342, asparagine 477, and asparagine 542 are each glycosylated (N-linked (GlcNAc...) asparagine). Residues 583–603 traverse the membrane as a helical segment; sequence LWLTSFISFFLVGCTVWVLEY. Residues 604–610 lie on the Cytoplasmic side of the membrane; that stretch reads KRNPDFS. The helical transmembrane segment at 611–631 threads the bilayer; it reads GPPRFQASTICWFAFSTMVFA. The Cytoplasmic segment spans residues 632–635; the sequence is PRER. A helical transmembrane segment spans residues 636 to 656; the sequence is VFSFWARALVIAWYFLVLVLT. Residues 657–830 lie on the Extracellular side of the membrane; the sequence is QSYTASLASL…FTSRQLDIDS (174 aa). A helical transmembrane segment spans residues 831-851; the sequence is FLFLFVGVLLVCVMALGNFTY. The Cytoplasmic portion of the chain corresponds to 852–895; the sequence is CFLAKDQVSYLDKVEMSPCSSSQQMPVKRKTQLNMSQVHDQDSL. The disordered stretch occupies residues 873-895; sequence SQQMPVKRKTQLNMSQVHDQDSL.

The protein belongs to the glutamate-gated ion channel (TC 1.A.10.1) family. As to quaternary structure, may form heteromers. In terms of tissue distribution, expressed predominantly in roots.

Its subcellular location is the membrane. Functionally, glutamate-gated receptor that probably acts as a non-selective cation channel. May be involved in light-signal transduction and calcium homeostasis via the regulation of calcium influx into cells. This Arabidopsis thaliana (Mouse-ear cress) protein is Glutamate receptor 2.3 (GLR2.3).